A 169-amino-acid polypeptide reads, in one-letter code: Cell division inhibitor SulA (169 aa).

The ftsZ binding stretch occupies residues 106–112 (ALRTGNY). The tract at residues 162–169 (KIHSNLYH) is lon protease binding.

It belongs to the SulA family. In terms of assembly, interacts with FtsZ. Is rapidly cleaved and degraded by the Lon protease once DNA damage is repaired.

Component of the SOS system and an inhibitor of cell division. Accumulation of SulA causes rapid cessation of cell division and the appearance of long, non-septate filaments. In the presence of GTP, binds a polymerization-competent form of FtsZ in a 1:1 ratio, thus inhibiting FtsZ polymerization and therefore preventing it from participating in the assembly of the Z ring. This mechanism prevents the premature segregation of damaged DNA to daughter cells during cell division. This Salmonella choleraesuis (strain SC-B67) protein is Cell division inhibitor SulA.